Consider the following 183-residue polypeptide: Ras-related protein Rap-2c (183 aa).

A GTP-binding site is contributed by 10–17; it reads GSGGVGKS. The Effector region motif lies at 32–40; that stretch reads YDPTIEDFY. GTP contacts are provided by residues 57–61 and 116–119; these read DTAGT and NKVD. S-palmitoyl cysteine attachment occurs at residues Cys-176 and Cys-177. Residue Cys-180 is modified to Cysteine methyl ester. Cys-180 is lipidated: S-geranylgeranyl cysteine. The propeptide at 181–183 is removed in mature form; that stretch reads VVQ.

It belongs to the small GTPase superfamily. Ras family. In terms of processing, palmitoylated. Palmitoylation is required for association with recycling endosome membranes and activation of TNIK.

It is found in the cytoplasm. It localises to the recycling endosome membrane. It catalyses the reaction GTP + H2O = GDP + phosphate + H(+). Its function is as follows. Small GTP-binding protein which cycles between a GDP-bound inactive and a GTP-bound active form. May play a role in cytoskeletal rearrangements and regulate cell spreading through activation of the effector TNIK. May play a role in SRE-mediated gene transcription. The sequence is that of Ras-related protein Rap-2c (RAP2C) from Bos taurus (Bovine).